The sequence spans 294 residues: Gap junction delta-3 protein (294 aa).

The Cytoplasmic segment spans residues 1-24 (MGEWAFLGSLLDAVQLQSPLVGRL). A helical membrane pass occupies residues 25-45 (WLVVMLIFRILVLATVGGAVF). Topologically, residues 46–76 (EDEQEEFVCNTLQPGCRQTCYDRAFPVSHYR) are extracellular. Residues 77-97 (FWLFHILLLSAPPVLFVVYSM) form a helical membrane-spanning segment. Over 98 to 136 (HRAGKEAGGAEAAAQCAPGLPEAQCAPCALRARRARRCY) the chain is Cytoplasmic. Residues 137-157 (LLSVALRLLAELTFLGGQALL) form a helical membrane-spanning segment. The Extracellular portion of the chain corresponds to 158-188 (YGFRVAPHFACAGPPCPHTVDCFVSRPTEKT). The helical transmembrane segment at 189–209 (VFVLFYFAVGLLSALLSVAEL) threads the bilayer. Residues 210-294 (GHLLWKGRPR…PATGRRDLAI (85 aa)) lie on the Cytoplasmic side of the membrane. The segment at 233–294 (EAQKLLPPPP…PATGRRDLAI (62 aa)) is disordered. Pro residues predominate over residues 238-250 (LPPPPPPPPPPAL).

This sequence belongs to the connexin family. Delta-type subfamily. As to quaternary structure, a connexon is composed of a hexamer of connexins. Interacts with TJP1. In terms of tissue distribution, expressed in vascular smooth muscle cells. Found in heart, colon, and artery (at protein level). Found in cerebral cortex, heart, liver, lung, kidney, spleen and testis.

It is found in the cell membrane. The protein resides in the cell junction. It localises to the gap junction. In terms of biological role, one gap junction consists of a cluster of closely packed pairs of transmembrane channels, the connexons, through which materials of low MW diffuse from one cell to a neighboring cell. The sequence is that of Gap junction delta-3 protein (GJD3) from Homo sapiens (Human).